A 284-amino-acid polypeptide reads, in one-letter code: RNA polymerase sigma factor RpoH (284 aa).

A sigma-70 factor domain-2 region spans residues 53-122 (LILSHLRFVV…IHEYVLRNWR (70 aa)). An Interaction with polymerase core subunit RpoC motif is present at residues 77–80 (DLIQ). The sigma-70 factor domain-4 stretch occupies residues 228–280 (AMQGLDERSQDIIRARWLDEDNKSTLQELADRYGVSAERVRQLEKNAMKKLRA). Positions 253 to 272 (LQELADRYGVSAERVRQLEK) form a DNA-binding region, H-T-H motif.

This sequence belongs to the sigma-70 factor family. RpoH subfamily. In terms of assembly, interacts with the RNA polymerase core enzyme.

The protein resides in the cytoplasm. In terms of biological role, sigma factors are initiation factors that promote the attachment of RNA polymerase to specific initiation sites and are then released. This sigma factor is involved in regulation of expression of heat shock genes. This is RNA polymerase sigma factor RpoH from Escherichia coli O6:H1 (strain CFT073 / ATCC 700928 / UPEC).